The primary structure comprises 63 residues: MAAIKSEVSAMKRYKCRVCGYIYDPEKGEPRTDTPPGTPFEDLPETWRCPSCGAKKKMFKPLD.

One can recognise a Rubredoxin-like domain in the interval 11–62; sequence MKRYKCRVCGYIYDPEKGEPRTDTPPGTPFEDLPETWRCPSCGAKKKMFKPL. 4 residues coordinate Fe cation: Cys16, Cys19, Cys49, and Cys52.

The protein belongs to the rubredoxin family. The cofactor is Fe(3+).

Its function is as follows. Rubredoxin is a small nonheme, iron protein lacking acid-labile sulfide. Its single Fe, chelated to 4 Cys, functions as an electron acceptor and may also stabilize the conformation of the molecule. The polypeptide is Probable rubredoxin (Methanothermobacter thermautotrophicus (strain ATCC 29096 / DSM 1053 / JCM 10044 / NBRC 100330 / Delta H) (Methanobacterium thermoautotrophicum)).